Here is a 378-residue protein sequence, read N- to C-terminus: Chorismate synthase (378 aa).

Arg-48 and Arg-54 together coordinate NADP(+). FMN is bound by residues 125-127 (RSS), 238-239 (NA), Gly-278, 293-297 (KPTSS), and Arg-319.

It belongs to the chorismate synthase family. In terms of assembly, homotetramer. The cofactor is FMNH2.

It carries out the reaction 5-O-(1-carboxyvinyl)-3-phosphoshikimate = chorismate + phosphate. It participates in metabolic intermediate biosynthesis; chorismate biosynthesis; chorismate from D-erythrose 4-phosphate and phosphoenolpyruvate: step 7/7. Catalyzes the anti-1,4-elimination of the C-3 phosphate and the C-6 proR hydrogen from 5-enolpyruvylshikimate-3-phosphate (EPSP) to yield chorismate, which is the branch point compound that serves as the starting substrate for the three terminal pathways of aromatic amino acid biosynthesis. This reaction introduces a second double bond into the aromatic ring system. The chain is Chorismate synthase from Azoarcus sp. (strain BH72).